A 117-amino-acid chain; its full sequence is Large ribosomal subunit protein bL20c (117 aa).

Belongs to the bacterial ribosomal protein bL20 family.

The protein resides in the plastid. It is found in the chloroplast. Its function is as follows. Binds directly to 23S ribosomal RNA and is necessary for the in vitro assembly process of the 50S ribosomal subunit. It is not involved in the protein synthesizing functions of that subunit. The sequence is that of Large ribosomal subunit protein bL20c from Phalaenopsis aphrodite subsp. formosana (Moth orchid).